An 853-amino-acid polypeptide reads, in one-letter code: DNA mismatch repair protein MutS (853 aa).

Residue 614–621 participates in ATP binding; the sequence is GPNMGGKS.

This sequence belongs to the DNA mismatch repair MutS family.

This protein is involved in the repair of mismatches in DNA. It is possible that it carries out the mismatch recognition step. This protein has a weak ATPase activity. The polypeptide is DNA mismatch repair protein MutS (Cronobacter sakazakii (strain ATCC BAA-894) (Enterobacter sakazakii)).